A 151-amino-acid polypeptide reads, in one-letter code: 3-hydroxyacyl-[acyl-carrier-protein] dehydratase FabZ (151 aa).

The active site involves histidine 53.

The protein belongs to the thioester dehydratase family. FabZ subfamily.

The protein resides in the cytoplasm. The catalysed reaction is a (3R)-hydroxyacyl-[ACP] = a (2E)-enoyl-[ACP] + H2O. In terms of biological role, involved in unsaturated fatty acids biosynthesis. Catalyzes the dehydration of short chain beta-hydroxyacyl-ACPs and long chain saturated and unsaturated beta-hydroxyacyl-ACPs. This Erythrobacter litoralis (strain HTCC2594) protein is 3-hydroxyacyl-[acyl-carrier-protein] dehydratase FabZ.